A 694-amino-acid chain; its full sequence is Junctophilin-2 (694 aa).

Residues 1–672 (MSGGRFDFDD…EVEVEEVPNT (672 aa)) lie on the Cytoplasmic side of the membrane. MORN repeat units lie at residues 14-36 (YCGG…KGQG), 38-59 (YSGS…SGNT), 60-79 (FEGY…TKGR), 82-104 (YKGE…SSGA), 106-128 (YEGT…DGGT), and 129-151 (YQGQ…PYGM). Residues serine 162 and serine 165 each carry the phosphoserine modification. Disordered regions lie at residues 164-192 (SSLR…ALPS) and 231-278 (RAES…AAPF). A compositionally biased stretch (low complexity) spans 176–189 (APDSPASPAADGPA). Positions 235–244 (RTSVGSQRSR) are enriched in polar residues. A compositionally biased stretch (low complexity) spans 250–267 (SDLSSGASDAASTASLGE). MORN repeat units follow at residues 290–312 (YMGE…SGLR) and 313–335 (YEGE…DGHR). The short motif at 350–364 (KRRVLPLKSNKVRQK) is the Bipartite nuclear localization signal element. Phosphoserine occurs at positions 445, 447, and 466. The segment at 448–663 (LLEPPDRGAA…KEAAQAAEAE (216 aa)) is disordered. Residues 467–476 (PQLHERETPR) show a composition bias toward basic and acidic residues. The residue at position 474 (threonine 474) is a Phosphothreonine. Residues 478–491 (EGGPPSPAGTPPQP) are compositionally biased toward pro residues. Serine 483 carries the phosphoserine modification. Threonine 487 is subject to Phosphothreonine. The Nuclear localization signal signature appears at 492 to 496 (KRPRP). Positions 522–540 (SRPATPAAAGAGRRSPARP) are enriched in low complexity. Phosphoserine occurs at positions 536, 542, 596, and 600. Over residues 589–610 (PEAADPDSAPASPATAPGQAPA) the composition is skewed to low complexity. A helical; Anchor for type IV membrane protein membrane pass occupies residues 673-693 (VLICMVILLNIGLAILFVHLL).

It belongs to the junctophilin family. As to quaternary structure, interacts with TRPC3. Interacts with BAG5 and HSPA8; the interaction with HSPA8 is increased in the presence of BAG5. Junctophilin-2 N-terminal fragment: Interacts with MEF2C. Post-translationally, proteolytically cleaved by calpain in response to cardiac stress. The major cleavage site takes place at the C-terminus and leads to the release of the Junctophilin-2 N-terminal fragment chain (JP2NT). Phosphorylation on Ser-165, probably by PKC, affects RYR1-mediated calcium ion release, interaction with TRPC3, and skeletal muscle myotubule development.

It localises to the cell membrane. The protein localises to the sarcoplasmic reticulum membrane. It is found in the endoplasmic reticulum membrane. The protein resides in the nucleus. Membrane-binding protein that provides a structural bridge between the plasma membrane and the sarcoplasmic reticulum and is required for normal excitation-contraction coupling in cardiomyocytes. Provides a structural foundation for functional cross-talk between the cell surface and intracellular Ca(2+) release channels by maintaining the 12-15 nm gap between the sarcolemma and the sarcoplasmic reticulum membranes in the cardiac dyads. Necessary for proper intracellular Ca(2+) signaling in cardiac myocytes via its involvement in ryanodine receptor-mediated calcium ion release. Contributes to the construction of skeletal muscle triad junctions. Its function is as follows. Transcription repressor required to safeguard against the deleterious effects of cardiac stress. Generated following cleavage of the Junctophilin-2 chain by calpain in response to cardiac stress in cardiomyocytes. Following cleavage and release from the membrane, translocates to the nucleus, binds DNA and represses expression of genes implicated in cell growth and differentiation, hypertrophy, inflammation and fibrosis. Modifies the transcription profile and thereby attenuates pathological remodeling in response to cardiac stress. Probably acts by competing with MEF2 transcription factors and TATA-binding proteins. The sequence is that of Junctophilin-2 (JPH2) from Oryctolagus cuniculus (Rabbit).